The sequence spans 359 residues: 3-dehydroquinate synthase (359 aa).

NAD(+)-binding positions include 106 to 110 (GVVGD), 130 to 131 (TS), lysine 143, and lysine 152. Glutamate 185, histidine 246, and histidine 263 together coordinate Zn(2+).

Belongs to the sugar phosphate cyclases superfamily. Dehydroquinate synthase family. Requires Co(2+) as cofactor. Zn(2+) serves as cofactor. NAD(+) is required as a cofactor.

The protein localises to the cytoplasm. It carries out the reaction 7-phospho-2-dehydro-3-deoxy-D-arabino-heptonate = 3-dehydroquinate + phosphate. The protein operates within metabolic intermediate biosynthesis; chorismate biosynthesis; chorismate from D-erythrose 4-phosphate and phosphoenolpyruvate: step 2/7. Catalyzes the conversion of 3-deoxy-D-arabino-heptulosonate 7-phosphate (DAHP) to dehydroquinate (DHQ). This chain is 3-dehydroquinate synthase, found in Clostridium kluyveri (strain ATCC 8527 / DSM 555 / NBRC 12016 / NCIMB 10680 / K1).